We begin with the raw amino-acid sequence, 556 residues long: 2-succinyl-5-enolpyruvyl-6-hydroxy-3-cyclohexene-1-carboxylate synthase (556 aa).

Belongs to the TPP enzyme family. MenD subfamily. Homodimer. Mg(2+) is required as a cofactor. Requires Mn(2+) as cofactor. The cofactor is thiamine diphosphate.

It catalyses the reaction isochorismate + 2-oxoglutarate + H(+) = 5-enolpyruvoyl-6-hydroxy-2-succinyl-cyclohex-3-ene-1-carboxylate + CO2. It functions in the pathway quinol/quinone metabolism; 1,4-dihydroxy-2-naphthoate biosynthesis; 1,4-dihydroxy-2-naphthoate from chorismate: step 2/7. The protein operates within quinol/quinone metabolism; menaquinone biosynthesis. Catalyzes the thiamine diphosphate-dependent decarboxylation of 2-oxoglutarate and the subsequent addition of the resulting succinic semialdehyde-thiamine pyrophosphate anion to isochorismate to yield 2-succinyl-5-enolpyruvyl-6-hydroxy-3-cyclohexene-1-carboxylate (SEPHCHC). The sequence is that of 2-succinyl-5-enolpyruvyl-6-hydroxy-3-cyclohexene-1-carboxylate synthase from Escherichia coli (strain 55989 / EAEC).